Here is a 131-residue protein sequence, read N- to C-terminus: Small ribosomal subunit protein eS8 (131 aa).

Residues 1–38 (MKLGAYYKGGDLKKPSGGKKRKVRRTKKKALGGGPPQI) form a disordered region. A compositionally biased stretch (basic residues) spans 16–30 (SGGKKRKVRRTKKKA).

The protein belongs to the eukaryotic ribosomal protein eS8 family. Part of the 30S ribosomal subunit.

The polypeptide is Small ribosomal subunit protein eS8 (Pyrobaculum arsenaticum (strain DSM 13514 / JCM 11321 / PZ6)).